We begin with the raw amino-acid sequence, 241 residues long: DNA repair protein RecO (241 aa).

The protein belongs to the RecO family.

Involved in DNA repair and RecF pathway recombination. This chain is DNA repair protein RecO, found in Ruegeria sp. (strain TM1040) (Silicibacter sp.).